A 122-amino-acid chain; its full sequence is Cytochrome b-c1 complex subunit 7-1, mitochondrial (122 aa).

Belongs to the UQCRB/QCR7 family. In terms of assembly, component of the ubiquinol-cytochrome c oxidoreductase (cytochrome b-c1 complex, complex III, CIII), a multisubunit enzyme composed of 10 subunits. The complex is composed of 3 respiratory subunits cytochrome b (MT-CYB), cytochrome c1 (CYC1-1 or CYC1-2) and Rieske protein (UCR1-1 or UCR1-2), 2 core protein subunits MPPalpha1 (or MPPalpha2) and MPPB, and 5 low-molecular weight protein subunits QCR7-1 (or QCR7-2), UCRQ-1 (or UCRQ-2), QCR9, UCRY and probably QCR6-1 (or QCR6-2). The complex exists as an obligatory dimer and forms supercomplexes (SCs) in the inner mitochondrial membrane with NADH-ubiquinone oxidoreductase (complex I, CI), resulting in different assemblies (supercomplexes SCI(1)III(2) and SCI(2)III(4)).

It is found in the mitochondrion inner membrane. In terms of biological role, component of the ubiquinol-cytochrome c oxidoreductase, a multisubunit transmembrane complex that is part of the mitochondrial electron transport chain which drives oxidative phosphorylation. The respiratory chain contains 3 multisubunit complexes succinate dehydrogenase (complex II, CII), ubiquinol-cytochrome c oxidoreductase (cytochrome b-c1 complex, complex III, CIII) and cytochrome c oxidase (complex IV, CIV), that cooperate to transfer electrons derived from NADH and succinate to molecular oxygen, creating an electrochemical gradient over the inner membrane that drives transmembrane transport and the ATP synthase. The cytochrome b-c1 complex catalyzes electron transfer from ubiquinol to cytochrome c, linking this redox reaction to translocation of protons across the mitochondrial inner membrane, with protons being carried across the membrane as hydrogens on the quinol. In the process called Q cycle, 2 protons are consumed from the matrix, 4 protons are released into the intermembrane space and 2 electrons are passed to cytochrome c. This is Cytochrome b-c1 complex subunit 7-1, mitochondrial (QCR7-1) from Arabidopsis thaliana (Mouse-ear cress).